Here is a 59-residue protein sequence, read N- to C-terminus: Cecropin-A2 (59 aa).

Positions 1-23 are cleaved as a signal peptide; that stretch reads MNFNKLFAIVLLAALVLLGQTEA.

This sequence belongs to the cecropin family.

It localises to the secreted. Its function is as follows. Cecropins have lytic and antibacterial activity against several Gram-positive and Gram-negative bacteria. This Aedes albopictus (Asian tiger mosquito) protein is Cecropin-A2 (CECA2).